Consider the following 101-residue polypeptide: Nucleoid-associated protein Bind_0255 (101 aa).

The protein belongs to the YbaB/EbfC family. Homodimer.

The protein resides in the cytoplasm. It is found in the nucleoid. Functionally, binds to DNA and alters its conformation. May be involved in regulation of gene expression, nucleoid organization and DNA protection. The polypeptide is Nucleoid-associated protein Bind_0255 (Beijerinckia indica subsp. indica (strain ATCC 9039 / DSM 1715 / NCIMB 8712)).